We begin with the raw amino-acid sequence, 338 residues long: Deoxyhypusine hydroxylase (338 aa).

5 HEAT-like PBS-type repeats span residues 71-97, 104-130, 200-233, 238-264, and 271-298; these read LKHE…VLKD, CRHE…LKDD, QRYR…GLKD, FRHE…CLSN, and VRHE…FLND. Residues His-73, Glu-74, His-106, and Glu-107 each contribute to the Fe cation site. His-240, Glu-241, His-273, and Glu-274 together coordinate Fe cation.

Belongs to the deoxyhypusine hydroxylase family. It depends on Fe(2+) as a cofactor.

It is found in the cytoplasm. The protein localises to the nucleus. It carries out the reaction [eIF5A protein]-deoxyhypusine + AH2 + O2 = [eIF5A protein]-hypusine + A + H2O. Its pathway is protein modification; eIF5A hypusination. Its function is as follows. Catalyzes the hydroxylation of the N(6)-(4-aminobutyl)-L-lysine intermediate to form hypusine, an essential post-translational modification only found in mature eIF-5A factor. This chain is Deoxyhypusine hydroxylase (lia1), found in Aspergillus niger (strain ATCC MYA-4892 / CBS 513.88 / FGSC A1513).